A 60-amino-acid polypeptide reads, in one-letter code: DNA-directed RNA polymerase subunit Rpo6 (60 aa).

The protein belongs to the archaeal Rpo6/eukaryotic RPB6 RNA polymerase subunit family. As to quaternary structure, part of the RNA polymerase complex.

It is found in the cytoplasm. It carries out the reaction RNA(n) + a ribonucleoside 5'-triphosphate = RNA(n+1) + diphosphate. Its function is as follows. DNA-dependent RNA polymerase (RNAP) catalyzes the transcription of DNA into RNA using the four ribonucleoside triphosphates as substrates. The polypeptide is DNA-directed RNA polymerase subunit Rpo6 (Picrophilus torridus (strain ATCC 700027 / DSM 9790 / JCM 10055 / NBRC 100828 / KAW 2/3)).